The sequence spans 541 residues: Neutral amino acid transporter B(0) (541 aa).

Met-1 bears the N-acetylmethionine mark. The Cytoplasmic segment spans residues 1-51; sequence MVADPPRDSKGLAAAEPTANGGLALASIEDQGAAAGGYCGSRDQVRRCLRA. The helical transmembrane segment at 52–81 threads the bilayer; the sequence is NLLVLLTVVAVVAGVALGLGVSGAGGALAL. Residues 82–94 are Extracellular-facing; sequence GPERLSAFVFPGE. Residues 95-116 form a helical membrane-spanning segment; that stretch reads LLLRLLRMIILPLVVCSLIGGA. Over 117-130 the chain is Cytoplasmic; the sequence is ASLDPGALGRLGAW. The chain crosses the membrane as a helical span at residues 131–153; that stretch reads ALLFFLVTTLLASALGVGLALAL. Residues 154–224 are Extracellular-facing; the sequence is QPGAASAAIN…GTRVKVPVGQ (71 aa). N-linked (GlcNAc...) asparagine glycans are attached at residues Asn-163 and Asn-212. Residues 225 to 248 traverse the membrane as a helical segment; that stretch reads EVEGMNILGLVVFAIVFGVALRKL. Residues 249 to 257 lie on the Cytoplasmic side of the membrane; the sequence is GPEGELLIR. Residues 258–285 form a helical membrane-spanning segment; it reads FFNSFNEATMVLVSWIMWYAPVGIMFLV. At 286-306 the chain is on the extracellular side; that stretch reads AGKIVEMEDVGLLFARLGKYI. The chain crosses the membrane as a helical span at residues 307 to 328; sequence LCCLLGHAIHGLLVLPLIYFLF. Residues 329-333 are Cytoplasmic-facing; the sequence is TRKNP. The discontinuously helical intramembrane region spans 334–364; that stretch reads YRFLWGIVTPLATAFGTSSSSATLPLMMKCV. At 365-373 the chain is on the cytoplasmic side; sequence EENNGVAKH. The chain crosses the membrane as a helical span at residues 374–400; sequence ISRFILPIGATVNMDGAALFQCVAAVF. Na(+) is bound by residues Gly-382, Thr-384, and Asn-386. The Extracellular portion of the chain corresponds to 401-413; the sequence is IAQLSQQSLDFVK. Residues 414–447 constitute an intramembrane region (discontinuously helical); sequence IITILVTATASSVGAAGIPAGGVLTLAIILEAVN. The Extracellular portion of the chain corresponds to 448–460; it reads LPVDHISLILAVD. The chain crosses the membrane as a helical span at residues 461-482; it reads WLVDRSCTVLNVEGDALGAGLL. Positions 471 and 475 each coordinate Na(+). Residues 483–541 lie on the Cytoplasmic side of the membrane; the sequence is QNYVDRTESRSTEPELIQVKSELPLDPLPVPTEEGNPLLKHYRGPAGDATVASEKESVM. At Ser-493 the chain carries Phosphoserine. At Thr-494 the chain carries Phosphothreonine. Residues Ser-503, Ser-535, and Ser-539 each carry the phosphoserine modification. The tract at residues 511-541 is disordered; it reads PVPTEEGNPLLKHYRGPAGDATVASEKESVM.

The protein belongs to the dicarboxylate/amino acid:cation symporter (DAACS) (TC 2.A.23) family. SLC1A5 subfamily. Homotrimer. Interacts with ERVH48-1/suppressyn; may negatively regulate syncytialization. Placenta, lung, skeletal muscle, kidney, pancreas, and intestine. Expressed in CD34-positive hematopoietic progenitors (at protein level).

The protein localises to the cell membrane. Its subcellular location is the melanosome. It catalyses the reaction L-glutamine(out) + L-serine(in) + Na(+)(out) = L-glutamine(in) + L-serine(out) + Na(+)(in). It carries out the reaction L-glutamine(in) + L-serine(out) + Na(+)(out) = L-glutamine(out) + L-serine(in) + Na(+)(in). The catalysed reaction is L-threonine(in) + L-glutamine(out) + Na(+)(out) = L-threonine(out) + L-glutamine(in) + Na(+)(in). The enzyme catalyses L-threonine(out) + L-glutamine(in) + Na(+)(out) = L-threonine(in) + L-glutamine(out) + Na(+)(in). It catalyses the reaction L-asparagine(in) + L-glutamine(out) + Na(+)(out) = L-asparagine(out) + L-glutamine(in) + Na(+)(in). It carries out the reaction L-asparagine(out) + L-glutamine(in) + Na(+)(out) = L-asparagine(in) + L-glutamine(out) + Na(+)(in). The catalysed reaction is L-glutamine(in) + L-alanine(out) + Na(+)(out) = L-glutamine(out) + L-alanine(in) + Na(+)(in). The enzyme catalyses L-valine(out) + L-glutamine(in) + Na(+)(out) = L-valine(in) + L-glutamine(out) + Na(+)(in). It catalyses the reaction L-glutamine(in) + L-methionine(out) + Na(+)(out) = L-glutamine(out) + L-methionine(in) + Na(+)(in). It carries out the reaction L-glutamine(in) + L-glutamate(out) + Na(+)(out) + H(+)(out) = L-glutamine(out) + L-glutamate(in) + Na(+)(in) + H(+)(in). The catalysed reaction is D-serine(in) + L-glutamine(out) + Na(+)(out) = D-serine(out) + L-glutamine(in) + Na(+)(in). The enzyme catalyses D-serine(in) + L-alanine(out) + Na(+)(out) = D-serine(out) + L-alanine(in) + Na(+)(in). It catalyses the reaction nitrate(in) = nitrate(out). It carries out the reaction iodide(out) = iodide(in). The catalysed reaction is thiocyanate(in) = thiocyanate(out). With respect to regulation, regulated by L-cysteine, which can either inhibit substrate influx or trigger substrate efflux without being transported itself. Its function is as follows. Sodium-coupled antiporter of neutral amino acids. In a tri-substrate transport cycle, exchanges neutral amino acids between the extracellular and intracellular compartments, coupled to the inward cotransport of at least one sodium ion. The preferred substrate is the essential amino acid L-glutamine, a precursor for biosynthesis of proteins, nucleotides and amine sugars as well as an alternative fuel for mitochondrial oxidative phosphorylation. Exchanges L-glutamine with other neutral amino acids such as L-serine, L-threonine and L-asparagine in a bidirectional way. Provides L-glutamine to proliferating stem and activated cells driving the metabolic switch toward cell differentiation. The transport cycle is usually pH-independent, with the exception of L-glutamate. Transports extracellular L-glutamate coupled to the cotransport of one proton and one sodium ion in exchange for intracellular L-glutamine counter-ion. May provide for L-glutamate uptake in glial cells regulating glutamine/glutamate cycle in the nervous system. Can transport D-amino acids. Mediates D-serine release from the retinal glia potentially affecting NMDA receptor function in retinal neurons. Displays sodium- and amino acid-dependent but uncoupled channel-like anion conductance with a preference SCN(-) &gt;&gt; NO3(-) &gt; I(-) &gt; Cl(-). Through binding of the fusogenic protein syncytin-1/ERVW-1 may mediate trophoblasts syncytialization, the spontaneous fusion of their plasma membranes, an essential process in placental development. In terms of biological role, (Microbial infection) Acts as a cell surface receptor for Feline endogenous virus RD114. (Microbial infection) Acts as a cell surface receptor for Baboon M7 endogenous virus. Functionally, (Microbial infection) Acts as a cell surface receptor for type D simian retroviruses. The chain is Neutral amino acid transporter B(0) from Homo sapiens (Human).